A 192-amino-acid polypeptide reads, in one-letter code: Lipid A acyltransferase PagP (192 aa).

The signal sequence occupies residues 1–26 (MTVVNKSFLTILIFFCQILFPLNASA). Catalysis depends on residues His-64, Asp-107, and Ser-108.

Belongs to the lipid A palmitoyltransferase family. Homodimer.

The protein resides in the cell outer membrane. It catalyses the reaction a lipid A + a 1,2-diacyl-sn-glycero-3-phosphocholine = a hepta-acyl lipid A + a 2-acyl-sn-glycero-3-phosphocholine. It carries out the reaction a lipid IVA + a 1,2-diacyl-sn-glycero-3-phosphocholine = a lipid IVB + a 2-acyl-sn-glycero-3-phosphocholine. The catalysed reaction is a lipid IIA + a 1,2-diacyl-sn-glycero-3-phosphocholine = a lipid IIB + a 2-acyl-sn-glycero-3-phosphocholine. In terms of biological role, transfers a fatty acid residue from the sn-1 position of a phospholipid to the N-linked hydroxyfatty acid chain on the proximal unit of lipid A or its precursors. This is Lipid A acyltransferase PagP from Cronobacter sakazakii (strain ATCC BAA-894) (Enterobacter sakazakii).